Here is a 292-residue protein sequence, read N- to C-terminus: Phosphatidylglycerol--prolipoprotein diacylglyceryl transferase (292 aa).

Transmembrane regions (helical) follow at residues 21–41, 60–80, 98–118, 124–144, 198–218, 225–245, and 258–278; these read VSLH…MWLA, LLYA…VLFY, GGMS…VFAH, FFQV…AGRL, SQLY…NLFI, GAVS…VEFF, and ISMG…MMIW. Residue Arg-143 coordinates a 1,2-diacyl-sn-glycero-3-phospho-(1'-sn-glycerol).

It belongs to the Lgt family.

The protein resides in the cell inner membrane. It catalyses the reaction L-cysteinyl-[prolipoprotein] + a 1,2-diacyl-sn-glycero-3-phospho-(1'-sn-glycerol) = an S-1,2-diacyl-sn-glyceryl-L-cysteinyl-[prolipoprotein] + sn-glycerol 1-phosphate + H(+). It functions in the pathway protein modification; lipoprotein biosynthesis (diacylglyceryl transfer). Catalyzes the transfer of the diacylglyceryl group from phosphatidylglycerol to the sulfhydryl group of the N-terminal cysteine of a prolipoprotein, the first step in the formation of mature lipoproteins. The polypeptide is Phosphatidylglycerol--prolipoprotein diacylglyceryl transferase (Erwinia tasmaniensis (strain DSM 17950 / CFBP 7177 / CIP 109463 / NCPPB 4357 / Et1/99)).